The primary structure comprises 1221 residues: Putative DNA-directed RNA polymerase II subunit RPB2 homolog (1221 aa).

Low complexity-rich tracts occupy residues 1-54 (MSRG…SASS) and 692-701 (PAPSSSPSDS). Disordered regions lie at residues 1 to 63 (MSRG…PMSE) and 673 to 701 (RGSG…PSDS). Asp823 is a binding site for Mg(2+). Zn(2+) is bound by residues Cys1174, Cys1177, Cys1187, and Cys1190. The C4-type zinc-finger motif lies at 1174–1190 (CKECGRISDHFEYCRMC).

This sequence belongs to the RNA polymerase beta chain family.

It carries out the reaction RNA(n) + a ribonucleoside 5'-triphosphate = RNA(n+1) + diphosphate. Functionally, component of the DNA-dependent RNA polymerase that catalyzes the transcription of DNA into RNA using the four ribonucleoside triphosphates as substrates. Second largest component of RNA polymerase II which synthesizes mRNA precursors and many functional non-coding RNAs. Proposed to contribute to the polymerase catalytic activity and forms the polymerase active center together with the largest subunit. In Dryophytes versicolor (chameleon treefrog), this protein is Putative DNA-directed RNA polymerase II subunit RPB2 homolog.